The sequence spans 719 residues: Nuclear protein MDM1 (719 aa).

The short motif at 9-15 (SEYQRNF) is the ST]-E-Y-X(3)-F motif 1; required for efficient microtubule binding and stabilization element. Residues 78–165 (NDALAPPEPQ…RPSTKPLPES (88 aa)) form a disordered region. Composition is skewed to basic and acidic residues over residues 93-105 (KPQE…DANH) and 123-144 (HSAD…DVTK). Phosphoserine occurs at positions 124 and 127. The ST]-E-Y-X(3)-F motif 2; required for efficient microtubule binding and stabilization signature appears at 192-198 (SEYQRQF). The ST]-E-Y-X(3)-F motif 3; required for efficient microtubule binding and stabilization motif lies at 235 to 241 (SEYKRNF). 3 positions are modified to phosphoserine: Ser266, Ser283, and Ser286. An ST]-E-Y-X(3)-F motif 4; required for efficient microtubule binding and stabilization motif is present at residues 306–312 (SEYRAKF). Ser314 bears the Phosphoserine mark. The stretch at 339-364 (NAMWYAEVKELREKAESYRKRVQGTH) forms a coiled coil. The tract at residues 453–523 (AWDAAEGTQK…SGKGGRLPTP (71 aa)) is disordered. Residues 465 to 475 (TQEEPSGEEDG) are compositionally biased toward acidic residues. Over residues 503–514 (PTEGSETSSVSS) the composition is skewed to low complexity. A phosphoserine mark is found at Ser565, Ser566, and Ser591.

This sequence belongs to the MDM1 family.

The protein resides in the nucleus. Its subcellular location is the cytoplasm. It localises to the cytoskeleton. It is found in the microtubule organizing center. The protein localises to the centrosome. The protein resides in the centriole. Its function is as follows. Microtubule-binding protein that negatively regulates centriole duplication. Binds to and stabilizes microtubules. This is Nuclear protein MDM1 (Mdm1) from Rattus norvegicus (Rat).